Reading from the N-terminus, the 99-residue chain is uncharacterized protein (99 aa).

The interval methionine 1–phenylalanine 99 is disordered. The segment covering glutamine 19–glutamate 29 has biased composition (polar residues).

This is an uncharacterized protein from Schizosaccharomyces pombe (strain 972 / ATCC 24843) (Fission yeast).